The primary structure comprises 239 residues: Uridylate kinase (239 aa).

Lys10 to Gly13 serves as a coordination point for ATP. Residues Gly18–Gly23 are involved in allosteric activation by GTP. Gly52 provides a ligand contact to UMP. ATP is bound by residues Gly53 and Arg57. Residues Asp73 and Thr134–Thr141 each bind UMP. Positions 161, 167, and 170 each coordinate ATP.

Belongs to the UMP kinase family. As to quaternary structure, homohexamer.

The protein localises to the cytoplasm. It catalyses the reaction UMP + ATP = UDP + ADP. The protein operates within pyrimidine metabolism; CTP biosynthesis via de novo pathway; UDP from UMP (UMPK route): step 1/1. Its activity is regulated as follows. Allosterically activated by GTP. Inhibited by UTP. Catalyzes the reversible phosphorylation of UMP to UDP. The polypeptide is Uridylate kinase (Campylobacter jejuni subsp. jejuni serotype O:6 (strain 81116 / NCTC 11828)).